A 665-amino-acid chain; its full sequence is tRNA 5-methylaminomethyl-2-thiouridine biosynthesis bifunctional protein MnmC (665 aa).

A tRNA (mnm(5)s(2)U34)-methyltransferase region spans residues 1–243 (MSQTSLHHAR…KREMLAGERA (243 aa)). The interval 268–665 (IGGGIASAMT…RKLLKGKPLQ (398 aa)) is FAD-dependent cmnm(5)s(2)U34 oxidoreductase.

It in the N-terminal section; belongs to the methyltransferase superfamily. tRNA (mnm(5)s(2)U34)-methyltransferase family. In the C-terminal section; belongs to the DAO family. The cofactor is FAD.

It is found in the cytoplasm. The catalysed reaction is 5-aminomethyl-2-thiouridine(34) in tRNA + S-adenosyl-L-methionine = 5-methylaminomethyl-2-thiouridine(34) in tRNA + S-adenosyl-L-homocysteine + H(+). Catalyzes the last two steps in the biosynthesis of 5-methylaminomethyl-2-thiouridine (mnm(5)s(2)U) at the wobble position (U34) in tRNA. Catalyzes the FAD-dependent demodification of cmnm(5)s(2)U34 to nm(5)s(2)U34, followed by the transfer of a methyl group from S-adenosyl-L-methionine to nm(5)s(2)U34, to form mnm(5)s(2)U34. The polypeptide is tRNA 5-methylaminomethyl-2-thiouridine biosynthesis bifunctional protein MnmC (Aeromonas hydrophila subsp. hydrophila (strain ATCC 7966 / DSM 30187 / BCRC 13018 / CCUG 14551 / JCM 1027 / KCTC 2358 / NCIMB 9240 / NCTC 8049)).